Consider the following 224-residue polypeptide: Glutathione S-transferase D7 (224 aa).

Residues 2-83 (PNLDLYNFPM…YLVEKYGKPD (82 aa)) enclose the GST N-terminal domain. Residues 53–55 (HTI) and 67–69 (ESR) contribute to the glutathione site. Positions 90–210 (DPQKRALINQ…LESLQQGKKF (121 aa)) constitute a GST C-terminal domain.

It belongs to the GST superfamily. Delta family. In terms of assembly, homodimer.

It carries out the reaction RX + glutathione = an S-substituted glutathione + a halide anion + H(+). Conjugation of reduced glutathione to a wide number of exogenous and endogenous hydrophobic electrophiles. May be involved in detoxification. The chain is Glutathione S-transferase D7 from Drosophila melanogaster (Fruit fly).